Reading from the N-terminus, the 488-residue chain is Ribulose bisphosphate carboxylase large chain (488 aa).

Asn127 and Thr177 together coordinate substrate. Catalysis depends on Lys179, which acts as the Proton acceptor. Lys181 provides a ligand contact to substrate. Positions 205, 207, and 208 each coordinate Mg(2+). Lys205 is modified (N6-carboxylysine). Catalysis depends on His297, which acts as the Proton acceptor. Substrate-binding residues include Arg298, His330, and Ser382.

The protein belongs to the RuBisCO large chain family. Type I subfamily. In terms of assembly, heterohexadecamer of 8 large chains and 8 small chains. Requires Mg(2+) as cofactor.

It localises to the plastid. The protein localises to the chloroplast. It carries out the reaction 2 (2R)-3-phosphoglycerate + 2 H(+) = D-ribulose 1,5-bisphosphate + CO2 + H2O. It catalyses the reaction D-ribulose 1,5-bisphosphate + O2 = 2-phosphoglycolate + (2R)-3-phosphoglycerate + 2 H(+). Functionally, ruBisCO catalyzes two reactions: the carboxylation of D-ribulose 1,5-bisphosphate, the primary event in carbon dioxide fixation, as well as the oxidative fragmentation of the pentose substrate in the photorespiration process. Both reactions occur simultaneously and in competition at the same active site. This Gracilaria tenuistipitata var. liui (Red alga) protein is Ribulose bisphosphate carboxylase large chain.